The following is a 406-amino-acid chain: DNA primase DnaG (406 aa).

Positions 169–247 constitute a Toprim domain; the sequence is PNLIIVEGRA…KIDFVARAPI (79 aa). Residues glutamate 175, aspartate 220, and aspartate 222 each contribute to the Mg(2+) site.

This sequence belongs to the archaeal DnaG primase family. Forms a ternary complex with MCM helicase and DNA. Component of the archaeal exosome complex. Interacts with Csl4 but not with Rrp4. The cofactor is Mg(2+).

The enzyme catalyses ssDNA + n NTP = ssDNA/pppN(pN)n-1 hybrid + (n-1) diphosphate.. Its function is as follows. RNA polymerase that catalyzes the synthesis of short RNA molecules used as primers for DNA polymerase during DNA replication. Can use NTPs but not dNTPs. Binds DNA. Also part of the exosome, which is a complex involved in RNA degradation. Acts as a poly(A)-binding protein that enhances the interaction between heteromeric, adenine-rich transcripts and the exosome. The protein is DNA primase DnaG of Saccharolobus solfataricus (strain ATCC 35092 / DSM 1617 / JCM 11322 / P2) (Sulfolobus solfataricus).